The following is a 249-amino-acid chain: Metallo-beta-lactamase type 2 (249 aa).

An N-terminal signal peptide occupies residues 1–22; sequence MLKKIKISLILALGLTSLQAFG. Zn(2+) is bound by residues His98, His100, Asp102, His161, and Cys180. Position 183 (Lys183) interacts with substrate. Position 222 (His222) interacts with Zn(2+).

The protein belongs to the metallo-beta-lactamase superfamily. Class-B beta-lactamase family. Monomer. It depends on Zn(2+) as a cofactor.

It localises to the periplasm. The catalysed reaction is a beta-lactam + H2O = a substituted beta-amino acid. Functionally, confers resistance to the different beta-lactams antibiotics (penicillin, cephalosporin and carbapenem) via the hydrolysis of the beta-lactam ring. The chain is Metallo-beta-lactamase type 2 (blaB3) from Elizabethkingia meningoseptica (Chryseobacterium meningosepticum).